The primary structure comprises 514 residues: Serine--tRNA ligase, cytoplasmic (514 aa).

Position 1 is an N-acetylmethionine (Met1). The interaction with tRNA stretch occupies residues 9–61 (RVDKGGDPALIRETQEKRFKDPGLVDQLVKADSEWRRCRFRADNLNKLKNLCS). Ser241 carries the post-translational modification Phosphoserine. L-serine contacts are provided by Thr271 and Arg302. ATP is bound by residues 302–304 (RQE) and 318–321 (VHQF). N6-acetyllysine is present on Lys323. Glu325 provides a ligand contact to L-serine. 391–394 (ELVS) is an ATP binding site. Asn427 is a binding site for L-serine. The tract at residues 472 to 514 (KPAPIDQEPSKKQKKQHEGSKKKAAARDVTLENRLQNMEVTDA) is disordered. Residues 479–502 (EPSKKQKKQHEGSKKKAAARDVTL) are compositionally biased toward basic and acidic residues. The short motif at 482–494 (KKQKKQHEGSKKK) is the Nuclear localization signal element. Residues 504–514 (NRLQNMEVTDA) are compositionally biased toward polar residues.

This sequence belongs to the class-II aminoacyl-tRNA synthetase family. Type-1 seryl-tRNA synthetase subfamily. As to quaternary structure, homodimer. The tRNA molecule may bind across the dimer. Interacts with SIRT2. Interacts with METTL6; interaction is required for the tRNA N(3)-methylcytidine methyltransferase activity of METTL6.

Its subcellular location is the cytoplasm. It is found in the nucleus. It catalyses the reaction tRNA(Ser) + L-serine + ATP = L-seryl-tRNA(Ser) + AMP + diphosphate + H(+). It carries out the reaction tRNA(Sec) + L-serine + ATP = L-seryl-tRNA(Sec) + AMP + diphosphate + H(+). Its pathway is aminoacyl-tRNA biosynthesis; selenocysteinyl-tRNA(Sec) biosynthesis; L-seryl-tRNA(Sec) from L-serine and tRNA(Sec): step 1/1. In terms of biological role, catalyzes the attachment of serine to tRNA(Ser) in a two-step reaction: serine is first activated by ATP to form Ser-AMP and then transferred to the acceptor end of tRNA(Ser). Is probably also able to aminoacylate tRNA(Sec) with serine, to form the misacylated tRNA L-seryl-tRNA(Sec), which will be further converted into selenocysteinyl-tRNA(Sec). In the nucleus, binds to the VEGFA core promoter and prevents MYC binding and transcriptional activation by MYC. Recruits SIRT2 to the VEGFA promoter, promoting deacetylation of histone H4 at 'Lys-16' (H4K16). Thereby, inhibits the production of VEGFA and sprouting angiogenesis mediated by VEGFA. The polypeptide is Serine--tRNA ligase, cytoplasmic (SARS1) (Oryctolagus cuniculus (Rabbit)).